Consider the following 39-residue polypeptide: Omega-theraphotoxin-Bs1b (39 aa).

3 disulfide bridges follow: cysteine 4/cysteine 25, cysteine 8/cysteine 31, and cysteine 17/cysteine 36.

This sequence belongs to the neurotoxin 12 (Hwtx-2) family. 06 (TXP1) subfamily. In terms of tissue distribution, expressed by the venom gland.

The protein resides in the secreted. Its function is as follows. Inhibits voltage-gated calcium channels (Cav) in rat cerebellar granule cells. Has insecticidal activity. The sequence is that of Omega-theraphotoxin-Bs1b from Brachypelma smithi (Mexican red knee tarantula).